A 207-amino-acid chain; its full sequence is Large ribosomal subunit protein uL4 (207 aa).

The segment at 49 to 78 (HAVKNRSAVRGGGRKPWRQKGTGRARQGSI) is disordered. Residues 60 to 71 (GGRKPWRQKGTG) show a composition bias toward basic residues.

It belongs to the universal ribosomal protein uL4 family. Part of the 50S ribosomal subunit.

One of the primary rRNA binding proteins, this protein initially binds near the 5'-end of the 23S rRNA. It is important during the early stages of 50S assembly. It makes multiple contacts with different domains of the 23S rRNA in the assembled 50S subunit and ribosome. In terms of biological role, forms part of the polypeptide exit tunnel. The sequence is that of Large ribosomal subunit protein uL4 from Latilactobacillus sakei subsp. sakei (strain 23K) (Lactobacillus sakei subsp. sakei).